The primary structure comprises 250 residues: DNA repair protein RecO (250 aa).

It belongs to the RecO family.

Functionally, involved in DNA repair and RecF pathway recombination. This Rhodospirillum centenum (strain ATCC 51521 / SW) protein is DNA repair protein RecO.